Here is a 559-residue protein sequence, read N- to C-terminus: MARRAAAGLLRRHLGPLAAGETLQARGMYPKQYGAANHAFSRFYSIQGQQRSLYGFRTNVETDDTQQSARMNFEVQKRSFSSAAAHVQRNPAYSVLNSDDVSYFKSILGDSGVVQDEDRVSVANMDWMGKYKGSSQLLLLPKSTAEVSKILSYCNSRRLAVVPQGGNTGLVGGSVPVYDEVIISLGGMDKIITFDNVNGILTCEAGCVLENLSSYVENKGFIMPLDLGAKGSCHIGGNISTNAGGLRFIRYGSLHGSVLGLEVVLADGTVLDMLTTLRKDNTGYDLKHLFIGSEGSLGIVTKIAILTPAKLPSTNVAFLSCNDYISCQKLLLAARRSLGEILSAFEFMDRHCINLAMKYLEGVHNPLPVSPYNFYVLIETTGSDESYDKAKLEAFLLRSMEDGLVADGVIAQDISQASNFWRIREGISEASVKVGAVYKYDLSIPVEKLYDIVEEMRSRVGDMGQVLGYGHLGDGNLHLNILSTKYSDKMLAQIEPFVYEWTSKQRGSISAEHGLGLMKADKIHYSKSSEAVQLMTSIKKLLDPNSILNPYKVLPQSVL.

The N-terminal 80 residues, 1–80 (MARRAAAGLL…MNFEVQKRSF (80 aa)), are a transit peptide targeting the mitochondrion. Positions 131–310 (YKGSSQLLLL…TKIAILTPAK (180 aa)) constitute an FAD-binding PCMH-type domain.

Belongs to the FAD-binding oxidoreductase/transferase type 4 family. As to quaternary structure, homodimer. Requires FAD as cofactor.

The protein resides in the mitochondrion. It carries out the reaction (R)-2-hydroxyglutarate + A = 2-oxoglutarate + AH2. Its function is as follows. Catalyzes the oxidation of D-2-hydroxyglutarate to alpha-ketoglutarate. The chain is Probable D-2-hydroxyglutarate dehydrogenase, mitochondrial (D2HGDH) from Oryza sativa subsp. indica (Rice).